Reading from the N-terminus, the 280-residue chain is Probable S-methyl-5'-thioinosine phosphorylase (280 aa).

Phosphate contacts are provided by residues Thr-8 and 50–51 (RH). Met-175 is a substrate binding site. Thr-176 provides a ligand contact to phosphate. A substrate-binding site is contributed by 199–201 (NYA).

It belongs to the PNP/MTAP phosphorylase family. MTAP subfamily. As to quaternary structure, homotrimer.

The catalysed reaction is S-methyl-5'-thioinosine + phosphate = 5-(methylsulfanyl)-alpha-D-ribose 1-phosphate + hypoxanthine. Its pathway is purine metabolism; purine nucleoside salvage. Functionally, catalyzes the reversible phosphorylation of S-methyl-5'-thioinosine (MTI) to hypoxanthine and 5-methylthioribose-1-phosphate. Involved in the breakdown of S-methyl-5'-thioadenosine (MTA), a major by-product of polyamine biosynthesis. Catabolism of (MTA) occurs via deamination to MTI and phosphorolysis to hypoxanthine. The chain is Probable S-methyl-5'-thioinosine phosphorylase from Methanothermobacter thermautotrophicus (strain ATCC 29096 / DSM 1053 / JCM 10044 / NBRC 100330 / Delta H) (Methanobacterium thermoautotrophicum).